A 494-amino-acid polypeptide reads, in one-letter code: Aspartyl/glutamyl-tRNA(Asn/Gln) amidotransferase subunit B (494 aa).

The protein belongs to the GatB/GatE family. GatB subfamily. Heterotrimer of A, B and C subunits.

It carries out the reaction L-glutamyl-tRNA(Gln) + L-glutamine + ATP + H2O = L-glutaminyl-tRNA(Gln) + L-glutamate + ADP + phosphate + H(+). The catalysed reaction is L-aspartyl-tRNA(Asn) + L-glutamine + ATP + H2O = L-asparaginyl-tRNA(Asn) + L-glutamate + ADP + phosphate + 2 H(+). Its function is as follows. Allows the formation of correctly charged Asn-tRNA(Asn) or Gln-tRNA(Gln) through the transamidation of misacylated Asp-tRNA(Asn) or Glu-tRNA(Gln) in organisms which lack either or both of asparaginyl-tRNA or glutaminyl-tRNA synthetases. The reaction takes place in the presence of glutamine and ATP through an activated phospho-Asp-tRNA(Asn) or phospho-Glu-tRNA(Gln). The protein is Aspartyl/glutamyl-tRNA(Asn/Gln) amidotransferase subunit B of Rhodopseudomonas palustris (strain BisA53).